Here is a 160-residue protein sequence, read N- to C-terminus: Cytochrome b6-f complex subunit 4 (160 aa).

3 consecutive transmembrane segments (helical) span residues leucine 36–valine 56, leucine 95–glutamate 115, and serine 131–isoleucine 151.

Belongs to the cytochrome b family. PetD subfamily. In terms of assembly, the 4 large subunits of the cytochrome b6-f complex are cytochrome b6, subunit IV (17 kDa polypeptide, PetD), cytochrome f and the Rieske protein, while the 4 small subunits are PetG, PetL, PetM and PetN. The complex functions as a dimer.

Its subcellular location is the cellular thylakoid membrane. Component of the cytochrome b6-f complex, which mediates electron transfer between photosystem II (PSII) and photosystem I (PSI), cyclic electron flow around PSI, and state transitions. This is Cytochrome b6-f complex subunit 4 from Prochlorococcus marinus subsp. pastoris (strain CCMP1986 / NIES-2087 / MED4).